We begin with the raw amino-acid sequence, 715 residues long: Fatty acid oxidation complex subunit alpha (715 aa).

The enoyl-CoA hydratase/isomerase stretch occupies residues 1–190 (MIYEGKAITV…KVGAVDAVVA (190 aa)). Asp-297 is a binding site for substrate. The segment at 312 to 715 (KDVKQAAVLG…MAKNGQSFFG (404 aa)) is 3-hydroxyacyl-CoA dehydrogenase. Residues Met-325, Asp-344, 401 to 403 (VVE), Lys-408, and Ser-430 contribute to the NAD(+) site. His-451 (for 3-hydroxyacyl-CoA dehydrogenase activity) is an active-site residue. Asn-454 contacts NAD(+). Positions 501 and 660 each coordinate substrate.

In the N-terminal section; belongs to the enoyl-CoA hydratase/isomerase family. This sequence in the C-terminal section; belongs to the 3-hydroxyacyl-CoA dehydrogenase family. Heterotetramer of two alpha chains (FadB) and two beta chains (FadA).

It carries out the reaction a (3S)-3-hydroxyacyl-CoA + NAD(+) = a 3-oxoacyl-CoA + NADH + H(+). The enzyme catalyses a (3S)-3-hydroxyacyl-CoA = a (2E)-enoyl-CoA + H2O. It catalyses the reaction a 4-saturated-(3S)-3-hydroxyacyl-CoA = a (3E)-enoyl-CoA + H2O. The catalysed reaction is (3S)-3-hydroxybutanoyl-CoA = (3R)-3-hydroxybutanoyl-CoA. It carries out the reaction a (3Z)-enoyl-CoA = a 4-saturated (2E)-enoyl-CoA. The enzyme catalyses a (3E)-enoyl-CoA = a 4-saturated (2E)-enoyl-CoA. The protein operates within lipid metabolism; fatty acid beta-oxidation. Functionally, involved in the aerobic and anaerobic degradation of long-chain fatty acids via beta-oxidation cycle. Catalyzes the formation of 3-oxoacyl-CoA from enoyl-CoA via L-3-hydroxyacyl-CoA. It can also use D-3-hydroxyacyl-CoA and cis-3-enoyl-CoA as substrate. In Pseudomonas fluorescens (strain Pf0-1), this protein is Fatty acid oxidation complex subunit alpha.